We begin with the raw amino-acid sequence, 627 residues long: Protein fem-1 homolog B (627 aa).

4 ANK repeats span residues 45 to 74 (QRST…VQTQ), 87 to 116 (DGAT…NVNH), 120 to 149 (TNST…NISI), and 153 to 182 (YDNT…DPNA). Residues His185, Cys186, and His218 each coordinate Zn(2+). 2 ANK repeats span residues 186-215 (CGAT…AIVV) and 218-248 (HGMT…DRRS). Residues 344–377 (SHPIIYRGAVYADNMEFEQCIKLWLHALHLRQKG) form a TPR repeat. ANK repeat units follow at residues 483–527 (EGFT…EVNA) and 531–568 (EGNS…HTDM).

It belongs to the fem-1 family. In terms of assembly, component of a CRL2 E3 ubiquitin-protein ligase complex, also named ECS (Elongin BC-CUL2/5-SOCS-box protein) complex, composed of CUL2, Elongin BC (ELOB and ELOC), RBX1 and substrate-specific adapter FEM1B. Homooligomer. Interacts with PPM1F and PHTF1. Interacts with the death domain of FAS/TNFRSF6 and TNFRSF1A. Interacts with CHEK1. Interacts with NKX3-1. In terms of tissue distribution, present in adult testis (at protein level).

Its subcellular location is the cytoplasm. The protein resides in the nucleus. It participates in protein modification; protein ubiquitination. With respect to regulation, activity of the CRL2(FEM1B) complex toward FNIP1 is inhibited by BEX family proteins (BEX1, BEX2, BEX3 and/or BEX4) in absence of reductive stress. Mechanistically, BEX proteins act as pseudosubstrate inhibitors that associate with FEM1B via zinc in absence of reductive stress, thereby preventing association between FEM1B and FNIP1. Functionally, substrate-recognition component of a Cul2-RING (CRL2) E3 ubiquitin-protein ligase complex of the DesCEND (destruction via C-end degrons) pathway, which recognizes a C-degron located at the extreme C terminus of target proteins, leading to their ubiquitination and degradation. The C-degron recognized by the DesCEND pathway is usually a motif of less than ten residues and can be present in full-length proteins, truncated proteins or proteolytically cleaved forms. The CRL2(FEM1B) complex specifically recognizes proteins ending with -Gly-Leu-Asp-Arg, such as CDK5R1, leading to their ubiquitination and degradation. Also acts as a regulator of the reductive stress response by mediating ubiquitination of reduced FNIP1: in response to reductive stress, the CRL2(FEM1B) complex specifically recognizes a conserved Cys degron in FNIP1 when this degron is reduced, leading to FNIP1 degradation and subsequent activation of mitochondria to recalibrate reactive oxygen species (ROS). Mechanistically, recognizes and binds reduced FNIP1 through two interface zinc ions, which act as a molecular glue that recruit reduced FNIP1 to FEM1B. Promotes ubiquitination of GLI1, suppressing GLI1 transcriptional activator activity. Promotes ubiquitination and degradation of ANKRD37. Promotes ubiquitination and degradation of SLBP. Involved in apoptosis by acting as a death receptor-associated protein that mediates apoptosis. Also involved in glucose homeostasis in pancreatic islet. May also act as an adapter/mediator in replication stress-induced signaling that leads to the activation of CHEK1. The chain is Protein fem-1 homolog B from Rattus norvegicus (Rat).